The following is a 258-amino-acid chain: Trans-aconitate 2-methyltransferase (258 aa).

Belongs to the methyltransferase superfamily. Tam family.

It is found in the cytoplasm. The enzyme catalyses trans-aconitate + S-adenosyl-L-methionine = (E)-3-(methoxycarbonyl)pent-2-enedioate + S-adenosyl-L-homocysteine. Functionally, catalyzes the S-adenosylmethionine monomethyl esterification of trans-aconitate. This Methylobacterium nodulans (strain LMG 21967 / CNCM I-2342 / ORS 2060) protein is Trans-aconitate 2-methyltransferase.